We begin with the raw amino-acid sequence, 177 residues long: Large ribosomal subunit protein uL22 (177 aa).

Residues 118–177 (VESRPSREGRRGGAGESAGGARARRAQGSKAAAAKKAPASSSKKAATTTEASEEAKGGSQ) form a disordered region. The span at 121-130 (RPSREGRRGG) shows a compositional bias: basic and acidic residues. Positions 145-167 (GSKAAAAKKAPASSSKKAATTTE) are enriched in low complexity.

The protein belongs to the universal ribosomal protein uL22 family. In terms of assembly, part of the 50S ribosomal subunit.

Its function is as follows. This protein binds specifically to 23S rRNA; its binding is stimulated by other ribosomal proteins, e.g. L4, L17, and L20. It is important during the early stages of 50S assembly. It makes multiple contacts with different domains of the 23S rRNA in the assembled 50S subunit and ribosome. Functionally, the globular domain of the protein is located near the polypeptide exit tunnel on the outside of the subunit, while an extended beta-hairpin is found that lines the wall of the exit tunnel in the center of the 70S ribosome. The polypeptide is Large ribosomal subunit protein uL22 (Mycobacterium sp. (strain KMS)).